The sequence spans 264 residues: NADH dehydrogenase [ubiquinone] iron-sulfur protein 3, mitochondrial (264 aa).

Residues 1–36 (MAAAAVARLWWRGILGASALTRGTGRPSVLLLPVRR) constitute a mitochondrion transit peptide.

Belongs to the complex I 30 kDa subunit family. Core subunit of respiratory chain NADH dehydrogenase (Complex I) which is composed of 45 different subunits. Interacts with NDUFAF3. Interacts with RAB5IF. Found in subcomplexes containing subunits NDUFS2, MT-ND1 and NDUFA13.

Its subcellular location is the mitochondrion inner membrane. It carries out the reaction a ubiquinone + NADH + 5 H(+)(in) = a ubiquinol + NAD(+) + 4 H(+)(out). In terms of biological role, core subunit of the mitochondrial membrane respiratory chain NADH dehydrogenase (Complex I) which catalyzes electron transfer from NADH through the respiratory chain, using ubiquinone as an electron acceptor. Essential for the catalytic activity and assembly of complex I. This chain is NADH dehydrogenase [ubiquinone] iron-sulfur protein 3, mitochondrial (NDUFS3), found in Pan troglodytes (Chimpanzee).